The sequence spans 23 residues: Unknown protein 1 (23 aa).

The chain is Unknown protein 1 from Coniferiporia sulphurascens (Laminated root rot fungus).